The following is a 596-amino-acid chain: Putative terpene synthase 2, chloroplastic (596 aa).

The N-terminal 46 residues, M1–S46, are a transit peptide targeting the chloroplast. D349 and D353 together coordinate Mn(2+). The DDXXD motif motif lies at D349–D353. 2 homodimerization regions span residues Y355–L361 and E427–P464. Residues D493 and E501 each coordinate Mn(2+).

This sequence belongs to the terpene synthase family. As to quaternary structure, homodimer. It depends on Mn(2+) as a cofactor. Mg(2+) is required as a cofactor.

It localises to the plastid. Its subcellular location is the chloroplast. It participates in secondary metabolite biosynthesis; terpenoid biosynthesis. Putative monoterpene synthase inactive on geranyl diphosphate (GPP). This chain is Putative terpene synthase 2, chloroplastic, found in Thymus vulgaris (Thyme).